A 269-amino-acid chain; its full sequence is Phosphonates import ATP-binding protein PhnC 2 (269 aa).

Positions 2–246 (LRIDSLSKRY…VLNEIYGEED (245 aa)) constitute an ABC transporter domain. 35-42 (GPSGAGKS) contributes to the ATP binding site. Residues 246–269 (DWNASGPAQDSEENEAVSAGVATH) are disordered.

It belongs to the ABC transporter superfamily. Phosphonates importer (TC 3.A.1.9.1) family. As to quaternary structure, the complex is composed of two ATP-binding proteins (PhnC), two transmembrane proteins (PhnE) and a solute-binding protein (PhnD).

The protein resides in the cell inner membrane. It carries out the reaction phosphonate(out) + ATP + H2O = phosphonate(in) + ADP + phosphate + H(+). Functionally, part of the ABC transporter complex PhnCDE involved in phosphonates import. Responsible for energy coupling to the transport system. This is Phosphonates import ATP-binding protein PhnC 2 from Synechococcus sp. (strain JA-2-3B'a(2-13)) (Cyanobacteria bacterium Yellowstone B-Prime).